Here is a 283-residue protein sequence, read N- to C-terminus: Alkaline ceramidase (283 aa).

Residues aspartate 28, tryptophan 29, glutamate 31, asparagine 33, and glutamate 42 each coordinate Ca(2+). A run of 2 helical transmembrane segments spans residues 43–63 and 69–89; these read FVNT…IMLF and FVTP…LSSM. Histidine 92 is a binding site for Zn(2+). 4 consecutive transmembrane segments (helical) span residues 98–118, 134–151, 154–174, and 187–209; these read IGQL…FSLF, TFSW…GLSW, PIVN…MLYT, and LGIR…RIFC. Residues histidine 221 and histidine 225 each coordinate Zn(2+). A helical membrane pass occupies residues 222 to 242; it reads GFWHIFIFIAAYTVLVLFAYF.

It belongs to the alkaline ceramidase family. Zn(2+) is required as a cofactor. As to expression, expressed in the central midgut of late embryos. In brain, it is present at the interhemispheric junction and in groups of cells in the central brain.

Its subcellular location is the membrane. It catalyses the reaction an N-acylsphing-4-enine + H2O = sphing-4-enine + a fatty acid. Its function is as follows. Hydrolyzes the sphingolipid ceramide into sphingosine and free fatty acid. In Drosophila melanogaster (Fruit fly), this protein is Alkaline ceramidase (bwa).